The chain runs to 247 residues: 5'-nucleotidase SurE (247 aa).

A divalent metal cation is bound by residues D8, D9, S39, and N91.

It belongs to the SurE nucleotidase family. It depends on a divalent metal cation as a cofactor.

Its subcellular location is the cytoplasm. The enzyme catalyses a ribonucleoside 5'-phosphate + H2O = a ribonucleoside + phosphate. In terms of biological role, nucleotidase that shows phosphatase activity on nucleoside 5'-monophosphates. This is 5'-nucleotidase SurE from Methylobacillus flagellatus (strain ATCC 51484 / DSM 6875 / VKM B-1610 / KT).